Here is a 337-residue protein sequence, read N- to C-terminus: Centromere protein N (337 aa).

Phosphoserine occurs at positions 226 and 233.

This sequence belongs to the CENP-N/CHL4 family. In terms of assembly, component of the CENPA-NAC complex, at least composed of CENPA, CENPC, CENPH, CENPM, CENPN, CENPT and CENPU. The CENPA-NAC complex interacts with the CENPA-CAD complex, composed of CENPI, CENPK, CENPL, CENPO, CENPP, CENPQ, CENPR and CENPS. Interacts directly with CENPA. Identified in a centromere complex containing histones H2A, H2B and H4, and at least CENPA, CENPB, CENPC, CENPT, CENPN, HJURP, SUPT16H, SSRP1 and RSF1.

It localises to the nucleus. Its subcellular location is the chromosome. The protein localises to the centromere. It is found in the kinetochore. Its function is as follows. Component of the CENPA-NAC (nucleosome-associated) complex, a complex that plays a central role in assembly of kinetochore proteins, mitotic progression and chromosome segregation. The CENPA-NAC complex recruits the CENPA-CAD (nucleosome distal) complex and may be involved in incorporation of newly synthesized CENPA into centromeres. CENPN is the first protein to bind specifically to CENPA nucleosomes and the direct binding of CENPA nucleosomes by CENPN is required for centromere assembly. Required for chromosome congression and efficiently align the chromosomes on a metaphase plate. This chain is Centromere protein N (Cenpn), found in Mus musculus (Mouse).